The following is a 356-amino-acid chain: Ribosomal RNA large subunit methyltransferase M (356 aa).

S-adenosyl-L-methionine-binding positions include serine 187, 220–223, aspartate 239, aspartate 259, and aspartate 276; that span reads CPGG. The Proton acceptor role is filled by lysine 305.

Belongs to the class I-like SAM-binding methyltransferase superfamily. RNA methyltransferase RlmE family. RlmM subfamily. As to quaternary structure, monomer.

It localises to the cytoplasm. It catalyses the reaction cytidine(2498) in 23S rRNA + S-adenosyl-L-methionine = 2'-O-methylcytidine(2498) in 23S rRNA + S-adenosyl-L-homocysteine + H(+). Catalyzes the 2'-O-methylation at nucleotide C2498 in 23S rRNA. This is Ribosomal RNA large subunit methyltransferase M from Pseudoalteromonas atlantica (strain T6c / ATCC BAA-1087).